The sequence spans 639 residues: 1-deoxy-D-xylulose-5-phosphate synthase (639 aa).

Residues H79 and 120–122 contribute to the thiamine diphosphate site; that span reads AHS. D151 lines the Mg(2+) pocket. Thiamine diphosphate is bound by residues 152–153, N180, Y289, and E371; that span reads GA. N180 lines the Mg(2+) pocket.

It belongs to the transketolase family. DXPS subfamily. As to quaternary structure, homodimer. Requires Mg(2+) as cofactor. The cofactor is thiamine diphosphate.

The catalysed reaction is D-glyceraldehyde 3-phosphate + pyruvate + H(+) = 1-deoxy-D-xylulose 5-phosphate + CO2. It functions in the pathway metabolic intermediate biosynthesis; 1-deoxy-D-xylulose 5-phosphate biosynthesis; 1-deoxy-D-xylulose 5-phosphate from D-glyceraldehyde 3-phosphate and pyruvate: step 1/1. Functionally, catalyzes the acyloin condensation reaction between C atoms 2 and 3 of pyruvate and glyceraldehyde 3-phosphate to yield 1-deoxy-D-xylulose-5-phosphate (DXP). The chain is 1-deoxy-D-xylulose-5-phosphate synthase from Allorhizobium ampelinum (strain ATCC BAA-846 / DSM 112012 / S4) (Agrobacterium vitis (strain S4)).